Here is a 919-residue protein sequence, read N- to C-terminus: Isoleucine--tRNA ligase (919 aa).

A 'HIGH' region motif is present at residues 57-67; that stretch reads PYANGHTHIGH. Residue Glu-569 coordinates L-isoleucyl-5'-AMP. The 'KMSKS' region motif lies at 610-614; it reads KMSKS. Lys-613 provides a ligand contact to ATP. Zn(2+) is bound by residues Cys-895, Cys-898, Cys-910, and Cys-913.

The protein belongs to the class-I aminoacyl-tRNA synthetase family. IleS type 1 subfamily. In terms of assembly, monomer. The cofactor is Zn(2+).

The protein resides in the cytoplasm. The enzyme catalyses tRNA(Ile) + L-isoleucine + ATP = L-isoleucyl-tRNA(Ile) + AMP + diphosphate. Functionally, catalyzes the attachment of isoleucine to tRNA(Ile). As IleRS can inadvertently accommodate and process structurally similar amino acids such as valine, to avoid such errors it has two additional distinct tRNA(Ile)-dependent editing activities. One activity is designated as 'pretransfer' editing and involves the hydrolysis of activated Val-AMP. The other activity is designated 'posttransfer' editing and involves deacylation of mischarged Val-tRNA(Ile). The polypeptide is Isoleucine--tRNA ligase (Sulfurimonas denitrificans (strain ATCC 33889 / DSM 1251) (Thiomicrospira denitrificans (strain ATCC 33889 / DSM 1251))).